Here is a 297-residue protein sequence, read N- to C-terminus: Carbamate kinase (297 aa).

It belongs to the carbamate kinase family.

The protein resides in the cytoplasm. The catalysed reaction is hydrogencarbonate + NH4(+) + ATP = carbamoyl phosphate + ADP + H2O + H(+). The enzyme catalyses carbamate + ATP = carbamoyl phosphate + ADP. It catalyses the reaction hydrogencarbonate + NH4(+) = carbamate + H2O + H(+). It functions in the pathway nitrogen metabolism; (S)-allantoin degradation. In terms of biological role, kinase involved in the anaerobic nitrogen utilization via the assimilation of allantoin. Catalyzes the transfer of a phosphate group from carbamoyl phosphate to ADP to produce ATP and leave carbamate, which spontaneously hydrolyzes to ammonia and hydrogencarbonate. The sequence is that of Carbamate kinase from Escherichia coli O6:H1 (strain CFT073 / ATCC 700928 / UPEC).